We begin with the raw amino-acid sequence, 558 residues long: Type I restriction enzyme MjaIX methylase subunit (558 aa).

The segment at 1 to 37 (MATLDKFLSIKENDEKTKKKESKKKSSKSNKTSESLV) is disordered. The span at 8-18 (LSIKENDEKTK) shows a compositional bias: basic and acidic residues. Positions 19-28 (KKESKKKSSK) are enriched in basic residues. Residues 227–232 (KFYTPR), 256–258 (SGG), and D283 contribute to the S-adenosyl-L-methionine site.

It belongs to the N(4)/N(6)-methyltransferase family. In terms of assembly, the type I restriction/modification system is composed of three polypeptides R, M and S.

It catalyses the reaction a 2'-deoxyadenosine in DNA + S-adenosyl-L-methionine = an N(6)-methyl-2'-deoxyadenosine in DNA + S-adenosyl-L-homocysteine + H(+). Functionally, the subtype gamma methyltransferase (M) subunit of a type I restriction enzyme. The M and S subunits together form a methyltransferase (MTase) that methylates A-3 on the top and A-2 on the bottom strand of the sequence 5'-CCAN(5)GTR-3'. In the presence of the R subunit the complex can also act as an endonuclease, binding to the same target sequence but cutting the DNA some distance from this site. Whether the DNA is cut or modified depends on the methylation state of the target sequence. When the target site is unmodified, the DNA is cut. When the target site is hemimethylated, the complex acts as a maintenance MTase modifying the DNA so that both strands become methylated. After locating a non-methylated recognition site, the enzyme complex serves as a molecular motor that translocates DNA in an ATP-dependent manner until a collision occurs that triggers cleavage. This is Type I restriction enzyme MjaIX methylase subunit from Methanocaldococcus jannaschii (strain ATCC 43067 / DSM 2661 / JAL-1 / JCM 10045 / NBRC 100440) (Methanococcus jannaschii).